The following is a 250-amino-acid chain: Silencing boundary-establishment protein FUB1 (250 aa).

The segment at Pro179–Ile250 is disordered. Basic and acidic residues predominate over residues Pro202–Met213. Positions Pro229–Ile250 are enriched in gly residues.

Belongs to the proteasome inhibitor PI31 family. As to quaternary structure, interacts with the 20S proteasome.

Plays a role in the establishment of transcriptional silencing boundaries, preventing the propagation of heterochromatic silencing. This Saccharomyces cerevisiae (strain ATCC 204508 / S288c) (Baker's yeast) protein is Silencing boundary-establishment protein FUB1.